The following is a 332-amino-acid chain: MNSTHHHGMYTSLHLWNRSSYGLHGNASESLGKGHPDGGCYEQLFVSPEVFVTLGVISLLENILVIVAIAKNKNLHSPMYFFICSLAVADMLVSVSNGSETIVITLLNSTDTDAQSFTVNIDNVIDSVICSSLLASICSLLSIAVDRYFTIFYALQYHNIMTVRRVGIIISCIWAACTVSGVLFIIYSDSSAVIICLISMFFTMLVLMASLYVHMFLMARLHIKRIAVLPGTGTIRQGTNMKGAITLTILIGVFVVCWAPFFLHLLFYISCPQNPYCVCFMSHFNLYLILIMCNAVIDPLIYALRSQELRKTFKEIICFYPLGGICELSSRY.

The Extracellular segment spans residues 1–43 (MNSTHHHGMYTSLHLWNRSSYGLHGNASESLGKGHPDGGCYEQ). N-linked (GlcNAc...) asparagine glycans are attached at residues asparagine 2, asparagine 17, and asparagine 26. Intrachain disulfides connect cysteine 40–cysteine 279 and cysteine 271–cysteine 277. A helical membrane pass occupies residues 44–69 (LFVSPEVFVTLGVISLLENILVIVAI). Topologically, residues 70-81 (AKNKNLHSPMYF) are cytoplasmic. The chain crosses the membrane as a helical span at residues 82–106 (FICSLAVADMLVSVSNGSETIVITL). Residue glutamate 100 coordinates Ca(2+). The Extracellular portion of the chain corresponds to 107–123 (LNSTDTDAQSFTVNIDN). Asparagine 108 carries N-linked (GlcNAc...) asparagine glycosylation. Ca(2+)-binding residues include aspartate 122 and aspartate 126. Residues 124–145 (VIDSVICSSLLASICSLLSIAV) traverse the membrane as a helical segment. The Cytoplasmic portion of the chain corresponds to 146–165 (DRYFTIFYALQYHNIMTVRR). A helical transmembrane segment spans residues 166-186 (VGIIISCIWAACTVSGVLFII). At 187–191 (YSDSS) the chain is on the extracellular side. A helical transmembrane segment spans residues 192–215 (AVIICLISMFFTMLVLMASLYVHM). At 216-248 (FLMARLHIKRIAVLPGTGTIRQGTNMKGAITLT) the chain is on the cytoplasmic side. Residues 249-271 (ILIGVFVVCWAPFFLHLLFYISC) traverse the membrane as a helical segment. Over 272 to 280 (PQNPYCVCF) the chain is Extracellular. Residues 281–304 (MSHFNLYLILIMCNAVIDPLIYAL) traverse the membrane as a helical segment. Topologically, residues 305–332 (RSQELRKTFKEIICFYPLGGICELSSRY) are cytoplasmic. A lipid anchor (S-palmitoyl cysteine) is attached at cysteine 318.

The protein belongs to the G-protein coupled receptor 1 family. As to quaternary structure, homodimer; disulfide-linked, also forms higher order oligomers. Interacts with GNAS. Interacts with ATRNL1. Interacts with MGRN1; this interaction competes with GNAS-binding and thus inhibits agonist-induced cAMP production. Interacts with MRAP and MRAP2; these associated factors increase ligand-sensitivity and generation of cAMP.

Its subcellular location is the cell membrane. Functionally, hormone receptor that acts as a key component of the leptin-melanocortin pathway at the intersection of homeostatic maintenance of energetic state. Plays a role in regulating food intake: activation by a stimulating hormone such as anorexigenic alpha-melanocyte stimulating hormone (alpha-MSH) inhibits appetite, whereas binding to a natural antagonist like Agouti-related protein/AGRP promotes appetite. G-protein-coupled receptor that activates conventional Galphas signaling leading to induction of anorexogenic signaling in the hypothalamus to result in negative energy balance. Regulates the firing activity of neurons from the hypothalamus by alpha-MSH and AGRP independently of Galphas signaling by ligand-induced coupling of closure of inwardly rectifying potassium channel KCNJ13. In intestinal epithelial cells, plays a role in the inhibition of hepatic glucose production via nesfatin-1/NUCB2 leading to increased cyclic adenosine monophosphate (cAMP) levels and glucagon-like peptide 1 (GLP-1) secretion in the intestinal epithelium. In Mus musculus (Mouse), this protein is Melanocortin receptor 4 (Mc4r).